Reading from the N-terminus, the 188-residue chain is MLTPHNVMAAGEEAPSILLPAVYDIVWSAVVFVVLLVVIWKYALPRVYAMLDGRTEAIAGGIEKAERAQAEADAAKAELTAQLAEARAEAGRIREQARVDATAIAAEIKEQATADAARITASAQQQIEAERQQAVVSLRSEVGSLAIDLASGVIGQSLTDDQRSTALVDRFLADLEASETAGRTGSAS.

A helical transmembrane segment spans residues 19 to 39 (LPAVYDIVWSAVVFVVLLVVI).

The protein belongs to the ATPase B chain family. As to quaternary structure, F-type ATPases have 2 components, F(1) - the catalytic core - and F(0) - the membrane proton channel. F(1) has five subunits: alpha(3), beta(3), gamma(1), delta(1), epsilon(1). F(0) has three main subunits: a(1), b(2) and c(10-14). The alpha and beta chains form an alternating ring which encloses part of the gamma chain. F(1) is attached to F(0) by a central stalk formed by the gamma and epsilon chains, while a peripheral stalk is formed by the delta and b chains.

It localises to the cell membrane. F(1)F(0) ATP synthase produces ATP from ADP in the presence of a proton or sodium gradient. F-type ATPases consist of two structural domains, F(1) containing the extramembraneous catalytic core and F(0) containing the membrane proton channel, linked together by a central stalk and a peripheral stalk. During catalysis, ATP synthesis in the catalytic domain of F(1) is coupled via a rotary mechanism of the central stalk subunits to proton translocation. Functionally, component of the F(0) channel, it forms part of the peripheral stalk, linking F(1) to F(0). The chain is ATP synthase subunit b from Clavibacter michiganensis subsp. michiganensis (strain NCPPB 382).